The following is a 1407-amino-acid chain: ABC transporter B family member 6 (1407 aa).

Residues 18–65 (LTPVSEVSEPPESPSPYLDPGAEHGGTGTAAQADDEEEMEEPEEMEPP) form a disordered region. The span at 50 to 63 (ADDEEEMEEPEEME) shows a compositional bias: acidic residues. Transmembrane regions (helical) follow at residues 84–104 (VLMV…IVYL), 139–159 (IVYI…CWIL), 212–231 (VGNY…IGFV), and 236–258 (IALI…NIFL). The region spanning 86–379 (MVFGSVAAAA…AATNFYSFDQ (294 aa)) is the ABC transmembrane type-1 1 domain. An N-linked (GlcNAc...) asparagine glycan is attached at Asn291. The next 2 membrane-spanning stretches (helical) occupy residues 310-330 (GILI…LAIC) and 351-371 (GEII…NQAA). Positions 412–647 (IEFRNVYFSY…GNLYAELLKC (236 aa)) constitute an ABC transporter 1 domain. 447–454 (GRNGSGKS) contributes to the ATP binding site. N-linked (GlcNAc...) asparagine glycosylation is found at Asn449 and Asn663. Disordered stretches follow at residues 670–696 (AERD…SLQR) and 709–815 (NSEE…DGQH). Asn727 carries an N-linked (GlcNAc...) asparagine glycan. Positions 733-755 (VGEKEPTIKRQDSFEMRLPELPK) are enriched in basic and acidic residues. Positions 761–770 (PQRQKSNGSD) are enriched in polar residues. An N-linked (GlcNAc...) asparagine glycan is attached at Asn767. One can recognise an ABC transmembrane type-1 2 domain in the interval 835-1123 (AVLGSIGAAI…PFGLAPYILK (289 aa)). 6 consecutive transmembrane segments (helical) span residues 840–860 (IGAA…ALVV), 880–900 (LIIA…HFYF), 958–978 (IFIQ…LLGW), 982–1002 (LVAL…KLWL), 1061–1081 (IGFA…LLLW), and 1102–1122 (MVFS…PYIL). Residues 1158–1395 (IELKNIDFCY…NGLYVRLMQP (238 aa)) enclose the ABC transporter 2 domain. Residue Asn1178 is glycosylated (N-linked (GlcNAc...) asparagine). 1193 to 1200 (GVSGSGKS) is an ATP binding site. 2 N-linked (GlcNAc...) asparagine glycosylation sites follow: Asn1260 and Asn1346.

It belongs to the ABC transporter superfamily. ABCB family. Multidrug resistance exporter (TC 3.A.1.201) subfamily. As to expression, expressed in aerial tissues.

The protein localises to the membrane. It catalyses the reaction (indol-3-yl)acetate(in) + ATP + H2O = (indol-3-yl)acetate(out) + ADP + phosphate + H(+). In terms of biological role, probable auxin efflux transporter that contributes, together with ABCB20 and in a FKBP42/TWD1-dependent manner, to the regulation of leaf position and morphology, internode distribution, roots development, and inflorescence organization, probably by modulating auxin repartition. The polypeptide is ABC transporter B family member 6 (Arabidopsis thaliana (Mouse-ear cress)).